The following is a 327-amino-acid chain: 1-aminocyclopropane-1-carboxylate oxidase 1 (327 aa).

The Fe2OG dioxygenase domain maps to 157–257 (PTFGTKVSNY…RMSIASFYNP (101 aa)). Fe cation contacts are provided by His181, Asp183, and His238.

Belongs to the iron/ascorbate-dependent oxidoreductase family. Requires Fe cation as cofactor.

The enzyme catalyses 1-aminocyclopropane-1-carboxylate + L-ascorbate + O2 = ethene + L-dehydroascorbate + hydrogen cyanide + CO2 + 2 H2O. It participates in alkene biosynthesis; ethylene biosynthesis via S-adenosyl-L-methionine; ethylene from S-adenosyl-L-methionine: step 2/2. This is 1-aminocyclopropane-1-carboxylate oxidase 1 (ACO1) from Doritaenopsis sp. (Moth orchid).